The chain runs to 44 residues: Somatoliberin (44 aa).

Leucine 44 bears the Leucine amide mark.

The protein belongs to the glucagon family.

Its subcellular location is the secreted. Its function is as follows. GRF is released by the hypothalamus and acts on the adenohypophyse to stimulate the secretion of growth hormone. This chain is Somatoliberin (GHRH), found in Sus scrofa (Pig).